The chain runs to 527 residues: Phospholipase A1-Igamma3, chloroplastic (527 aa).

The N-terminal 52 residues, 1–52, are a transit peptide targeting the chloroplast; it reads MASLSLPITLKNPRFFSSSPQNIFKTQPQTLVLTTKFKTCSIICSSSCTSIS. Positions 55–65 are enriched in low complexity; the sequence is TTQQKQSNKQT. Residues 55–82 form a disordered region; sequence TTQQKQSNKQTHVSDNKREEKAEEEEEE. Positions 66–75 are enriched in basic and acidic residues; it reads HVSDNKREEK. The GXSXG signature appears at 300-304; the sequence is GHSLG. The active-site Acyl-ester intermediate is serine 302. Catalysis depends on charge relay system residues aspartate 366 and histidine 423.

It belongs to the AB hydrolase superfamily. Lipase family. As to expression, highly expressed in flowers. Lower levels in seedlings, leaves and stems.

The protein resides in the plastid. Its subcellular location is the chloroplast. It catalyses the reaction 1,2-dihexadecanoyl-sn-glycero-3-phosphocholine + H2O = 2-hexadecanoyl-sn-glycero-3-phosphocholine + hexadecanoate + H(+). The enzyme catalyses a 1,2-diacyl-3-O-(beta-D-galactosyl)-sn-glycerol + H2O = an acyl-3-O-(beta-D-galactosyl)-sn-glycerol + a fatty acid + H(+). It carries out the reaction a 1,2-diacyl-3-O-[alpha-D-galactosyl-(1-&gt;6)-beta-D-galactosyl]-sn-glycerol + H2O = acyl-3-O-[alpha-D-galactosyl-(1-&gt;6)-beta-D-galactosyl]-sn-glycerol + a fatty acid + H(+). Functionally, acylhydrolase that catalyzes the hydrolysis of phosphatidylcholine at the sn-1 position. Moderate activity toward phosphatidylcholine (PC), monogalactosyldiacylglycerol (MGDG), digalactosyldiacylglycerol (DGDG) and triacylglycerol (TAG). In Arabidopsis thaliana (Mouse-ear cress), this protein is Phospholipase A1-Igamma3, chloroplastic.